The following is a 278-amino-acid chain: 3-methyl-2-oxobutanoate hydroxymethyltransferase (278 aa).

The Mg(2+) site is built by D43 and D82. 3-methyl-2-oxobutanoate-binding positions include D43–S44, D82, and K112. E114 serves as a coordination point for Mg(2+). The active-site Proton acceptor is E181.

This sequence belongs to the PanB family. As to quaternary structure, homodecamer; pentamer of dimers. Mg(2+) is required as a cofactor.

The protein localises to the cytoplasm. The enzyme catalyses 3-methyl-2-oxobutanoate + (6R)-5,10-methylene-5,6,7,8-tetrahydrofolate + H2O = 2-dehydropantoate + (6S)-5,6,7,8-tetrahydrofolate. It functions in the pathway cofactor biosynthesis; (R)-pantothenate biosynthesis; (R)-pantoate from 3-methyl-2-oxobutanoate: step 1/2. Functionally, catalyzes the reversible reaction in which hydroxymethyl group from 5,10-methylenetetrahydrofolate is transferred onto alpha-ketoisovalerate to form ketopantoate. This Bacillus cereus (strain ATCC 14579 / DSM 31 / CCUG 7414 / JCM 2152 / NBRC 15305 / NCIMB 9373 / NCTC 2599 / NRRL B-3711) protein is 3-methyl-2-oxobutanoate hydroxymethyltransferase.